The sequence spans 308 residues: MGFKGYILSIVFNGKDFANKYYLMLKEFLKQHNLRDKIALKVVLANDEPASNLYVSIKSRVAKEIGLNVEVIKFSANSVQSDILEVIDRENKNLSTDGIIVQLPLLKGMDLNSILNSIVYSKDVDGLSFVNLGKMILGDKKGFIPCTALAVLKILRDEGIKTLGKTVVVVGRSPLVGRPISILLSSKPYDATVIVCHSKSIYLDVYLRQADIVISAVGKPRLIDKSMLCGKPYVIDIGISEIETDNGKILSGDTDFDNIKECVKFITPVKGGIGPVTVLMLMFNTIKAHLINNRMFDVLNRLEKLLEV.

Residues glycine 171–serine 173, serine 198, and isoleucine 239 each bind NADP(+).

It belongs to the tetrahydrofolate dehydrogenase/cyclohydrolase family. Homodimer.

It carries out the reaction (6R)-5,10-methylene-5,6,7,8-tetrahydrofolate + NADP(+) = (6R)-5,10-methenyltetrahydrofolate + NADPH. The enzyme catalyses (6R)-5,10-methenyltetrahydrofolate + H2O = (6R)-10-formyltetrahydrofolate + H(+). The protein operates within one-carbon metabolism; tetrahydrofolate interconversion. In terms of biological role, catalyzes the oxidation of 5,10-methylenetetrahydrofolate to 5,10-methenyltetrahydrofolate and then the hydrolysis of 5,10-methenyltetrahydrofolate to 10-formyltetrahydrofolate. In Borreliella burgdorferi (strain ATCC 35210 / DSM 4680 / CIP 102532 / B31) (Borrelia burgdorferi), this protein is Bifunctional protein FolD.